Reading from the N-terminus, the 544-residue chain is Chaperonin GroEL (544 aa).

ATP contacts are provided by residues 30–33 (TLGP), K51, 87–91 (DGTTT), G415, and D495.

Belongs to the chaperonin (HSP60) family. In terms of assembly, forms a cylinder of 14 subunits composed of two heptameric rings stacked back-to-back. Interacts with the co-chaperonin GroES.

It is found in the cytoplasm. It carries out the reaction ATP + H2O + a folded polypeptide = ADP + phosphate + an unfolded polypeptide.. Its function is as follows. Together with its co-chaperonin GroES, plays an essential role in assisting protein folding. The GroEL-GroES system forms a nano-cage that allows encapsulation of the non-native substrate proteins and provides a physical environment optimized to promote and accelerate protein folding. In Neisseria flavescens, this protein is Chaperonin GroEL.